A 1908-amino-acid polypeptide reads, in one-letter code: Putative ankyrin repeat protein L484 (1908 aa).

ANK repeat units lie at residues 20–50 (DIMEQFFLTIKTGDIDKIRNFVAQNKNKFNI), 60–97 (PNKTPIHAVLELDDRIADQETKLTIIKYLDKMGAPMDL), 101–130 (DNVWPIHLAAADQDEDIIDYMLKNKVSIDR), 134–167 (SNNTPLHYAVYGKQVPCFDKVKVGSIVPPQDIDK), and 1370–1399 (DGNTPLHLAISMTNPDIVEILLKHGANPFT). The stretch at 1539 to 1603 (VQLLNPKLRD…QTNISDLEFK (65 aa)) forms a coiled coil.

It is found in the virion. The protein is Putative ankyrin repeat protein L484 of Acanthamoeba polyphaga mimivirus (APMV).